The primary structure comprises 306 residues: MSSTHRPTQYSSILPAERLPEWLRRPIGSVSQLEQMQQLVKGNHLHTICEEGRCPNRGECYAAGTATFLLGGSICTRSCAFCQVMKGQSPQAIDPLEAERVADAVQQMGLRYVVLTSVARDDLPDHGVSIFTETMAAIRQRNPLIEIEVLTPDFWGGVADLAKALEAQRERLTQLLMAAPVCFNHNLETVERLQSKVRRGATYHHSLSLLAAARELAPNIPTKSGLMLGLGEEQEEVVQTLEDLRSVDCQRVTLGQYLRPSLAHIPVHRYWHPEDFKNLAEVACKLGFAQVRSGPLVRSSYHAGEE.

[4Fe-4S] cluster contacts are provided by Cys-49, Cys-54, Cys-60, Cys-75, Cys-79, Cys-82, and Ser-300. The Radical SAM core domain maps to 61-289 (YAAGTATFLL…AEVACKLGFA (229 aa)).

It belongs to the radical SAM superfamily. Lipoyl synthase family. It depends on [4Fe-4S] cluster as a cofactor.

Its subcellular location is the cytoplasm. The catalysed reaction is [[Fe-S] cluster scaffold protein carrying a second [4Fe-4S](2+) cluster] + N(6)-octanoyl-L-lysyl-[protein] + 2 oxidized [2Fe-2S]-[ferredoxin] + 2 S-adenosyl-L-methionine + 4 H(+) = [[Fe-S] cluster scaffold protein] + N(6)-[(R)-dihydrolipoyl]-L-lysyl-[protein] + 4 Fe(3+) + 2 hydrogen sulfide + 2 5'-deoxyadenosine + 2 L-methionine + 2 reduced [2Fe-2S]-[ferredoxin]. The protein operates within protein modification; protein lipoylation via endogenous pathway; protein N(6)-(lipoyl)lysine from octanoyl-[acyl-carrier-protein]: step 2/2. Catalyzes the radical-mediated insertion of two sulfur atoms into the C-6 and C-8 positions of the octanoyl moiety bound to the lipoyl domains of lipoate-dependent enzymes, thereby converting the octanoylated domains into lipoylated derivatives. The chain is Lipoyl synthase 2 from Prochlorococcus marinus (strain MIT 9313).